Consider the following 1700-residue polypeptide: Ras-responsive element-binding protein 1 (1700 aa).

The interval 31–63 (TENGGSPQGIKSPMKPPGPNRIGRRNQETKEEK) is disordered. Residues Ser36 and Ser42 each carry the phosphoserine modification. 3 consecutive C2H2-type zinc fingers follow at residues 66 to 88 (YNCP…IRQH), 97 to 119 (HACS…MLVH), and 125 to 147 (YKCT…MKIH). Residues 146–195 (IHEKDTNSTTAAAPPSPLKRRRLSSKRKLSHDAESEDPGPAKKMVEDGQS) form a disordered region. Ser161 is subject to Phosphoserine. Residues 163 to 174 (LKRRRLSSKRKL) are compositionally biased toward basic residues. Ser175 and Ser180 each carry phosphoserine. The span at 184–195 (GPAKKMVEDGQS) shows a compositional bias: basic and acidic residues. The C2H2-type 4 zinc finger occupies 206–228 (FHCPVCFKEFVCKYELETHMETH). Residue Ser229 is modified to Phosphoserine. 2 C2H2-type zinc fingers span residues 233–256 (LRCD…ALVH) and 314–336 (FVCD…RQSH). Glycyl lysine isopeptide (Lys-Gly) (interchain with G-Cter in SUMO2) cross-links involve residues Lys433, Lys500, Lys549, Lys564, Lys591, and Lys611. Lys613 is covalently cross-linked (Glycyl lysine isopeptide (Lys-Gly) (interchain with G-Cter in SUMO1); alternate). A Glycyl lysine isopeptide (Lys-Gly) (interchain with G-Cter in SUMO2); alternate cross-link involves residue Lys613. A Glycyl lysine isopeptide (Lys-Gly) (interchain with G-Cter in SUMO2) cross-link involves residue Lys622. C2H2-type zinc fingers lie at residues 641-663 (YPCR…VRSH), 669-691 (YQCN…IRTH), 697-720 (YICK…RKKH), 751-782 (TVCR…GGCH), and 788-813 (FECK…QHLH). Residues Lys855, Lys883, and Lys911 each participate in a glycyl lysine isopeptide (Lys-Gly) (interchain with G-Cter in SUMO2) cross-link. Disordered regions lie at residues 939 to 991 (IPKS…SLET) and 1092 to 1177 (ADPG…AVDL). Residues 944-961 (KKGDKDTVVPSDAKKPEP) show a composition bias toward basic and acidic residues. Phosphoserine is present on Ser970. The span at 1097–1111 (SITSSNTVATDSPGS) shows a compositional bias: polar residues. Phosphoserine is present on residues Ser1125, Ser1137, and Ser1138. Low complexity predominate over residues 1137-1146 (SSPEEALPTE). Residues 1155-1165 (SRKRGRKRGLR) are compositionally biased toward basic residues. A phosphoserine mark is found at Ser1172, Ser1179, Ser1180, and Ser1230. Disordered regions lie at residues 1195 to 1235 (TNKF…AEDR), 1273 to 1368 (HTDS…QSLD), 1383 to 1521 (SEAG…RKKV), and 1564 to 1670 (VRHQ…SPAA). The segment at 1251 to 1273 (INCPHCPRVFPWASSLQRHMLTH) adopts a C2H2-type 12 zinc-finger fold. Over residues 1273–1285 (HTDSQSDTDTLTT) the composition is skewed to low complexity. Residues 1327-1346 (SEEEEEKETEENPEPEEECR) show a composition bias toward acidic residues. The C2H2-type 13 zinc-finger motif lies at 1400–1422 (HACDTCGKNFKFLGTLSRHKKAH). A phosphoserine mark is found at Ser1450 and Ser1452. Basic and acidic residues predominate over residues 1492–1507 (TAEKRGDGDKRPKTDS). 2 consecutive C2H2-type zinc fingers follow at residues 1520 to 1542 (KVCS…MRSH) and 1548 to 1570 (YKCQ…QRIH). Basic residues predominate over residues 1564–1580 (VRHQRIHQKARHSKHHG). Residues Ser1593 and Ser1606 each carry the phosphoserine modification. Over residues 1645–1660 (AEQAAEPSAPKEQASP) the composition is skewed to low complexity. Position 1667 is a phosphoserine (Ser1667).

The protein belongs to the krueppel C2H2-type zinc-finger protein family. As to quaternary structure, interacts with NEUROD1. Interacts with AR. Expressed in splenic B-cells.

The protein resides in the nucleus speckle. Functionally, transcription factor that binds specifically to the RAS-responsive elements (RRE) of gene promoters. Represses the angiotensinogen gene. Negatively regulates the transcriptional activity of AR. Potentiates the transcriptional activity of NEUROD1. Binds specifically to the allelic variant of the CDKN2A promoter present in Balb/c mice, which leads to a down-regulation of CDKN2A expression in this strain, and, as a consequence, to an elevated susceptibility to pristane-induced tumors. Promotes brown adipocyte differentiation. May be involved in Ras/Raf-mediated cell differentiation by enhancing calcitonin expression. The polypeptide is Ras-responsive element-binding protein 1 (Rreb1) (Mus musculus (Mouse)).